The following is a 103-amino-acid chain: Seminal ribonuclease (103 aa).

Intrachain disulfides connect cysteine 12/cysteine 70, cysteine 26/cysteine 81, cysteine 44/cysteine 96, and cysteine 51/cysteine 58. Substrate contacts are provided by residues 27 to 31 (KLVNT), lysine 52, and arginine 71.

Belongs to the pancreatic ribonuclease family. Homodimer; disulfide-linked.

The protein localises to the secreted. It carries out the reaction an [RNA] containing cytidine + H2O = an [RNA]-3'-cytidine-3'-phosphate + a 5'-hydroxy-ribonucleotide-3'-[RNA].. The catalysed reaction is an [RNA] containing uridine + H2O = an [RNA]-3'-uridine-3'-phosphate + a 5'-hydroxy-ribonucleotide-3'-[RNA].. In terms of biological role, this enzyme hydrolyzes both single- and double-stranded RNA. The sequence is that of Seminal ribonuclease (SRN) from Cephalophus silvicultor (Yellow-backed duiker).